Here is a 366-residue protein sequence, read N- to C-terminus: tRNA/tmRNA (uracil-C(5))-methyltransferase (366 aa).

S-adenosyl-L-methionine is bound by residues glutamine 188, tyrosine 216, asparagine 221, glutamate 237, and aspartate 297. Cysteine 322 acts as the Nucleophile in catalysis. Glutamate 356 functions as the Proton acceptor in the catalytic mechanism.

It belongs to the class I-like SAM-binding methyltransferase superfamily. RNA M5U methyltransferase family. TrmA subfamily.

The catalysed reaction is uridine(54) in tRNA + S-adenosyl-L-methionine = 5-methyluridine(54) in tRNA + S-adenosyl-L-homocysteine + H(+). The enzyme catalyses uridine(341) in tmRNA + S-adenosyl-L-methionine = 5-methyluridine(341) in tmRNA + S-adenosyl-L-homocysteine + H(+). Functionally, dual-specificity methyltransferase that catalyzes the formation of 5-methyluridine at position 54 (m5U54) in all tRNAs, and that of position 341 (m5U341) in tmRNA (transfer-mRNA). This chain is tRNA/tmRNA (uracil-C(5))-methyltransferase, found in Histophilus somni (strain 129Pt) (Haemophilus somnus).